The primary structure comprises 51 residues: Large ribosomal subunit protein bL32c (51 aa).

It belongs to the bacterial ribosomal protein bL32 family.

The protein resides in the plastid. Its subcellular location is the chloroplast. This Oenothera elata subsp. hookeri (Hooker's evening primrose) protein is Large ribosomal subunit protein bL32c.